A 555-amino-acid polypeptide reads, in one-letter code: Spermine oxidase (555 aa).

FAD contacts are provided by residues Ala-35, Glu-55, Arg-63, 79-80 (TW), and Val-261. The disordered stretch occupies residues 271–307 (AHPRGPEIEPRGEGDHNHDTGEGGQSGENPQQGRWDE). Over residues 274-291 (RGPEIEPRGEGDHNHDTG) the composition is skewed to basic and acidic residues. Residues Glu-519 and 528–529 (TT) each bind FAD.

It belongs to the flavin monoamine oxidase family. Requires FAD as cofactor. In terms of tissue distribution, widely expressed. Isoform 1 and isoform 2 are expressed at higher level in brain and skeletal muscle. Isoform 7 is found in brain and spleen, isoform 10 is widely expressed but found at lower level in heart, kidney, liver and lung.

Its subcellular location is the cytoplasm. The protein resides in the nucleus. The enzyme catalyses spermine + O2 + H2O = 3-aminopropanal + spermidine + H2O2. It participates in amine and polyamine degradation; spermine degradation. Flavoenzyme which catalyzes the oxidation of spermine to spermidine. Can also use N(1)-acetylspermine and spermidine as substrates, with different affinity depending on the isoform (isozyme) and on the experimental conditions. Plays an important role in the regulation of polyamine intracellular concentration and has the potential to act as a determinant of cellular sensitivity to the antitumor polyamine analogs. May contribute to beta-alanine production via aldehyde dehydrogenase conversion of 3-amino-propanal. This chain is Spermine oxidase (Smox), found in Mus musculus (Mouse).